Consider the following 174-residue polypeptide: Crossover junction endodeoxyribonuclease RuvC (174 aa).

Catalysis depends on residues Asp8, Glu69, and Asp141. Mg(2+) contacts are provided by Asp8, Glu69, and Asp141.

This sequence belongs to the RuvC family. Homodimer which binds Holliday junction (HJ) DNA. The HJ becomes 2-fold symmetrical on binding to RuvC with unstacked arms; it has a different conformation from HJ DNA in complex with RuvA. In the full resolvosome a probable DNA-RuvA(4)-RuvB(12)-RuvC(2) complex forms which resolves the HJ. Requires Mg(2+) as cofactor.

Its subcellular location is the cytoplasm. The enzyme catalyses Endonucleolytic cleavage at a junction such as a reciprocal single-stranded crossover between two homologous DNA duplexes (Holliday junction).. Functionally, the RuvA-RuvB-RuvC complex processes Holliday junction (HJ) DNA during genetic recombination and DNA repair. Endonuclease that resolves HJ intermediates. Cleaves cruciform DNA by making single-stranded nicks across the HJ at symmetrical positions within the homologous arms, yielding a 5'-phosphate and a 3'-hydroxyl group; requires a central core of homology in the junction. The consensus cleavage sequence is 5'-(A/T)TT(C/G)-3'. Cleavage occurs on the 3'-side of the TT dinucleotide at the point of strand exchange. HJ branch migration catalyzed by RuvA-RuvB allows RuvC to scan DNA until it finds its consensus sequence, where it cleaves and resolves the cruciform DNA. The protein is Crossover junction endodeoxyribonuclease RuvC of Xanthomonas campestris pv. campestris (strain 8004).